A 117-amino-acid chain; its full sequence is Neurotoxic enhancer CSTX-13 (117 aa).

The first 20 residues, Met1–Ala20, serve as a signal peptide directing secretion. Residues Glu21–Arg47 constitute a propeptide that is removed on maturation. Cystine bridges form between Cys50–Cys65, Cys57–Cys74, Cys64–Cys95, and Cys76–Cys93. The propeptide occupies Arg82–Arg87. Position 116 is a threonine amide (Thr116).

It belongs to the neurotoxin 19 (CSTX) family. 12 subfamily. Heterodimer of A and B chains; disulfide-linked. Interacts with CSTX-1 (AC P81694) (Kd=430 nM), and with CSTX-9 (AC P58604) (Kd=370 nM). As to expression, expressed by the venom gland.

The protein resides in the secreted. It localises to the target cell membrane. Its function is as follows. Synergistic toxin that induces or increases a cytolytic effect when combined with CSTX-1 (AC P81694) or CSTX-9 (AC P58604). When alone, has a weak insecticidal activity, with an unknown molecular target. The sequence is that of Neurotoxic enhancer CSTX-13 from Cupiennius salei (American wandering spider).